A 450-amino-acid chain; its full sequence is Bifunctional apoptosis regulator (450 aa).

Basic and acidic residues predominate over residues 1-20 (MEEPQKNDLSMREQEEEHPV). The interval 1 to 25 (MEEPQKNDLSMREQEEEHPVRSSGP) is disordered. The Cytoplasmic segment spans residues 1 to 140 (MEEPQKNDLS…PSTGRVNPQR (140 aa)). The RING-type zinc finger occupies 34-74 (CHCCYDTLVNPTTLNCGHSFCRHCLALWWMSSKKTECPECR). Residues 141–161 (GGGFFSGVLTALTGVAVILLV) form a helical membrane-spanning segment. At 162 to 331 (YHWRSRESEH…REPTWKQWRE (170 aa)) the chain is on the extracellular side. One can recognise an SAM domain in the interval 182-249 (WTMEEVVLWL…LTELERVRAL (68 aa)). Residues Asn-232 and Asn-308 are each glycosylated (N-linked (GlcNAc...) asparagine). A helical transmembrane segment spans residues 332–352 (FLVKYSFLPYQLIAEFAWDWL). Topologically, residues 353–360 (EVHYWTSR) are cytoplasmic. The chain crosses the membrane as a helical span at residues 361 to 381 (FLIVNAVLLSVLELFSFWRIW). Over 382–404 (SRSELKTVPQRMWSHFWKVSTQG) the chain is Extracellular. Residues 405-425 (LFMAMFWPLIPQFVCNCLFYW) form a helical membrane-spanning segment. Topologically, residues 426–450 (ALYFNPIINIDLVVKEVRRLETQVL) are cytoplasmic.

In terms of assembly, interacts with CASP8, BCL2 and BCL2L1 through SAM domain and also with HIP1, IFT57, ESRRBL1 and BCAP31. Interacts with NGFR; this interaction inhibits NF-kappa-B and JNK-related signaling pathways. Post-translationally, mediates RING-dependent self-ubiquitination leading to proteasomal degradation.

It localises to the endoplasmic reticulum membrane. The catalysed reaction is S-ubiquitinyl-[E2 ubiquitin-conjugating enzyme]-L-cysteine + [acceptor protein]-L-lysine = [E2 ubiquitin-conjugating enzyme]-L-cysteine + N(6)-ubiquitinyl-[acceptor protein]-L-lysine.. Functionally, membrane-bound E3 ubiquitin ligase that plays a role in several processes including apoptosis regulation or reticulum endoplasmic stress. Has anti-apoptotic activity, both for apoptosis triggered via death-receptors and via mitochondrial factors. Contributes to the dynamic control of IRE1/ERN1 signaling during ER stress by inducing BAX inhibitor 1/TMBIM6 proteasomal degradation. Promotes the activation of TGF-beta signaling by mediating the 'Lys-63'-linked ubiquitination of TGFBR1 which is critical to activate the pathway. Together with NGFR, negatively regulates NF-kappa-B and JNK-related signaling pathways. Promotes the proteasome-mediated degradation of PNPLA3, a protein involveld in lipid metabolism. The protein is Bifunctional apoptosis regulator (Bfar) of Mus musculus (Mouse).